The chain runs to 343 residues: Anthranilate phosphoribosyltransferase (343 aa).

Residues G83, 86 to 87 (GD), T91, 93 to 96 (NIST), 111 to 119 (KHGGRSVSS), and S123 each bind 5-phospho-alpha-D-ribose 1-diphosphate. Residue G83 coordinates anthranilate. S95 lines the Mg(2+) pocket. Anthranilate is bound at residue R169. Mg(2+) contacts are provided by D228 and E229.

The protein belongs to the anthranilate phosphoribosyltransferase family. In terms of assembly, homodimer. Mg(2+) is required as a cofactor.

The catalysed reaction is N-(5-phospho-beta-D-ribosyl)anthranilate + diphosphate = 5-phospho-alpha-D-ribose 1-diphosphate + anthranilate. It functions in the pathway amino-acid biosynthesis; L-tryptophan biosynthesis; L-tryptophan from chorismate: step 2/5. In terms of biological role, catalyzes the transfer of the phosphoribosyl group of 5-phosphorylribose-1-pyrophosphate (PRPP) to anthranilate to yield N-(5'-phosphoribosyl)-anthranilate (PRA). This chain is Anthranilate phosphoribosyltransferase, found in Thiobacillus denitrificans (strain ATCC 25259 / T1).